The primary structure comprises 565 residues: Zinc finger protein 512 (565 aa).

Residues 1-30 form a disordered region; that stretch reads MSSRLGAVPATSGPTTFKQQRSTRIVGAKN. A compositionally biased stretch (polar residues) spans 12–23; it reads SGPTTFKQQRST. Glycyl lysine isopeptide (Lys-Gly) (interchain with G-Cter in SUMO2) cross-links involve residues Lys-18 and Lys-83. The interval 85–147 is disordered; the sequence is AATSHVEGSG…QARRIRKEPP (63 aa). Positions 118–129 are enriched in basic residues; the sequence is KKHKLYGRKQRP. The C2H2-type 1 zinc-finger motif lies at 196 to 219; that stretch reads FTCHHCGKQLRSLAGMKYHVMANH. Residue Lys-226 forms a Glycyl lysine isopeptide (Lys-Gly) (interchain with G-Cter in SUMO2) linkage. Residues 286–309 form a C2H2-type 2 zinc finger; sequence LKCHHCGKPYRSKAGLAYHLRSEH. A Glycyl lysine isopeptide (Lys-Gly) (interchain with G-Cter in SUMO2) cross-link involves residue Lys-332. A C2H2-type 3; atypical zinc finger spans residues 405–429; sequence IQCPNQGCEAVYSSVSGLKAHLGSC. Residues 439–462 form a C2H2-type 4 zinc finger; the sequence is YKCLLCQKEFVSESGVKYHINSVH. Positions 484–493 are enriched in basic and acidic residues; that stretch reads KQRQQEEEKR. Positions 484-565 are disordered; the sequence is KQRQQEEEKR…PKTNHKRGRK (82 aa). Residues 494–507 are compositionally biased toward basic residues; that stretch reads RQQHRSRRSLRRRQ. Positions 522-531 are enriched in basic and acidic residues; it reads VGKDQRRNEE. A compositionally biased stretch (basic residues) spans 554–565; it reads KPPKTNHKRGRK.

The protein belongs to the krueppel C2H2-type zinc-finger protein family.

The protein resides in the nucleus. Its function is as follows. May be involved in transcriptional regulation. This is Zinc finger protein 512 (ZNF512) from Macaca fascicularis (Crab-eating macaque).